Here is a 208-residue protein sequence, read N- to C-terminus: Large ribosomal subunit protein bL25 (208 aa).

This sequence belongs to the bacterial ribosomal protein bL25 family. CTC subfamily. In terms of assembly, part of the 50S ribosomal subunit; part of the 5S rRNA/L5/L18/L25 subcomplex. Contacts the 5S rRNA. Binds to the 5S rRNA independently of L5 and L18.

Functionally, this is one of the proteins that binds to the 5S RNA in the ribosome where it forms part of the central protuberance. The polypeptide is Large ribosomal subunit protein bL25 (Bartonella quintana (strain Toulouse) (Rochalimaea quintana)).